A 335-amino-acid chain; its full sequence is MTHNIHDNISQWMKSNEETPIVMSSRIRLARNLENHVHPLMYATENDGFRVINEVQDALPNFELMRLDQMDQQSKMKMVAKHLISPELIKQPAAAVLVNDDESLSVMINEEDHIRIQAMGTDTTLQALYNQASSIDDELDRSLDISYDEQLGYLTTCPTNIGTGMRASVMLHLPGLSIMKRMTRIAQTINRFGYTIRGIYGEGSQVYGHTYQVSNQLTLGKSELEIIETLTEVVNQIIHEEKQIRQKLDTYNQLETQDRVFRSLGILQNCRMITMEEASYRLSEVKLGIDLNYIELQNFKFNELMVAIQSPFLLDEEDDKSVKEKRADILREHIK.

The Phosphagen kinase C-terminal domain occupies 21–244; it reads IVMSSRIRLA…NQIIHEEKQI (224 aa). Residues 24-28, histidine 82, arginine 115, 166-170, and 197-202 each bind ATP; these read SSRIR, RASVM, and RGIYGE.

It belongs to the ATP:guanido phosphotransferase family.

It catalyses the reaction L-arginyl-[protein] + ATP = N(omega)-phospho-L-arginyl-[protein] + ADP + H(+). Catalyzes the specific phosphorylation of arginine residues in proteins. This Staphylococcus aureus (strain USA300) protein is Protein-arginine kinase.